Reading from the N-terminus, the 325-residue chain is NADH-quinone oxidoreductase subunit H (325 aa).

8 helical membrane passes run 8 to 28 (VIDILLTVVKAVVILLVVVTC), 81 to 101 (GIFTLAPVIAFTSLLITFAIV), 114 to 134 (IGVLFFLMMAGLAVYAVLFAG), 159 to 179 (FLGLSLMGVVAQAGSFNLGAI), 186 to 206 (LWNVVPQFFGFVTFALAGVAV), 237 to 257 (FFVGEYVGIVTISALMVTLFF), 265 to 285 (LPPFIWFSIKTAFFMMMFILI), and 304 to 324 (ICLPLTLLNLLATAAVILYNA).

This sequence belongs to the complex I subunit 1 family. In terms of assembly, NDH-1 is composed of 13 different subunits. Subunits NuoA, H, J, K, L, M, N constitute the membrane sector of the complex.

The protein resides in the cell inner membrane. It carries out the reaction a quinone + NADH + 5 H(+)(in) = a quinol + NAD(+) + 4 H(+)(out). NDH-1 shuttles electrons from NADH, via FMN and iron-sulfur (Fe-S) centers, to quinones in the respiratory chain. The immediate electron acceptor for the enzyme in this species is believed to be ubiquinone. Couples the redox reaction to proton translocation (for every two electrons transferred, four hydrogen ions are translocated across the cytoplasmic membrane), and thus conserves the redox energy in a proton gradient. This subunit may bind ubiquinone. The chain is NADH-quinone oxidoreductase subunit H from Sodalis glossinidius (strain morsitans).